The following is a 133-amino-acid chain: ATP synthase epsilon chain (133 aa).

The protein belongs to the ATPase epsilon chain family. As to quaternary structure, F-type ATPases have 2 components, CF(1) - the catalytic core - and CF(0) - the membrane proton channel. CF(1) has five subunits: alpha(3), beta(3), gamma(1), delta(1), epsilon(1). CF(0) has three main subunits: a, b and c.

The protein localises to the cell membrane. In terms of biological role, produces ATP from ADP in the presence of a proton gradient across the membrane. The sequence is that of ATP synthase epsilon chain from Staphylococcus haemolyticus (strain JCSC1435).